The sequence spans 298 residues: Small ribosomal subunit biogenesis GTPase RsgA 1 (298 aa).

The CP-type G domain maps to 63–224 (QTQLVRPPVA…VADTPGFSSY (162 aa)). GTP-binding positions include 112-115 (AKTD) and 167-175 (GQTGAGKST). Residues Cys-248, Cys-253, His-255, and Cys-261 each coordinate Zn(2+).

The protein belongs to the TRAFAC class YlqF/YawG GTPase family. RsgA subfamily. In terms of assembly, monomer. Associates with 30S ribosomal subunit, binds 16S rRNA. It depends on Zn(2+) as a cofactor.

It localises to the cytoplasm. One of several proteins that assist in the late maturation steps of the functional core of the 30S ribosomal subunit. Helps release RbfA from mature subunits. May play a role in the assembly of ribosomal proteins into the subunit. Circularly permuted GTPase that catalyzes slow GTP hydrolysis, GTPase activity is stimulated by the 30S ribosomal subunit. This Lactiplantibacillus plantarum (strain ATCC BAA-793 / NCIMB 8826 / WCFS1) (Lactobacillus plantarum) protein is Small ribosomal subunit biogenesis GTPase RsgA 1.